The primary structure comprises 380 residues: Cytochrome b (380 aa).

The next 4 helical transmembrane spans lie at 34–54, 78–99, 114–134, and 179–199; these read FGSL…LLAM, WLIR…FLHI, WNTG…GYVL, and FFAL…IHLI. 2 residues coordinate heme b: H84 and H98. Positions 183 and 197 each coordinate heme b. Residue H202 participates in a ubiquinone binding. The next 4 helical transmembrane spans lie at 227–247, 289–309, 321–341, and 348–368; these read LKDI…ALFS, LGGV…PFLH, LSQT…WVGS, and FIII…ILFP.

Belongs to the cytochrome b family. In terms of assembly, the cytochrome bc1 complex contains 11 subunits: 3 respiratory subunits (MT-CYB, CYC1 and UQCRFS1), 2 core proteins (UQCRC1 and UQCRC2) and 6 low-molecular weight proteins (UQCRH/QCR6, UQCRB/QCR7, UQCRQ/QCR8, UQCR10/QCR9, UQCR11/QCR10 and a cleavage product of UQCRFS1). This cytochrome bc1 complex then forms a dimer. Heme b serves as cofactor.

It is found in the mitochondrion inner membrane. In terms of biological role, component of the ubiquinol-cytochrome c reductase complex (complex III or cytochrome b-c1 complex) that is part of the mitochondrial respiratory chain. The b-c1 complex mediates electron transfer from ubiquinol to cytochrome c. Contributes to the generation of a proton gradient across the mitochondrial membrane that is then used for ATP synthesis. The protein is Cytochrome b (MT-CYB) of Tragopan temminckii (Temminck's tragopan).